We begin with the raw amino-acid sequence, 322 residues long: Phosphatidylserine decarboxylase proenzyme (322 aa).

Active-site charge relay system; for autoendoproteolytic cleavage activity residues include Asp-90, His-147, and Ser-254. Residue Ser-254 is the Schiff-base intermediate with substrate; via pyruvic acid; for decarboxylase activity of the active site. A Pyruvic acid (Ser); by autocatalysis modification is found at Ser-254. The interval 293 to 322 (PDAEPAPLPAEEIEAEHDASPLIDDKKDQV) is disordered. A compositionally biased stretch (basic and acidic residues) spans 308–322 (EHDASPLIDDKKDQV).

Belongs to the phosphatidylserine decarboxylase family. PSD-B subfamily. Prokaryotic type I sub-subfamily. In terms of assembly, heterodimer of a large membrane-associated beta subunit and a small pyruvoyl-containing alpha subunit. Requires pyruvate as cofactor. Is synthesized initially as an inactive proenzyme. Formation of the active enzyme involves a self-maturation process in which the active site pyruvoyl group is generated from an internal serine residue via an autocatalytic post-translational modification. Two non-identical subunits are generated from the proenzyme in this reaction, and the pyruvate is formed at the N-terminus of the alpha chain, which is derived from the carboxyl end of the proenzyme. The autoendoproteolytic cleavage occurs by a canonical serine protease mechanism, in which the side chain hydroxyl group of the serine supplies its oxygen atom to form the C-terminus of the beta chain, while the remainder of the serine residue undergoes an oxidative deamination to produce ammonia and the pyruvoyl prosthetic group on the alpha chain. During this reaction, the Ser that is part of the protease active site of the proenzyme becomes the pyruvoyl prosthetic group, which constitutes an essential element of the active site of the mature decarboxylase.

The protein resides in the cell membrane. The enzyme catalyses a 1,2-diacyl-sn-glycero-3-phospho-L-serine + H(+) = a 1,2-diacyl-sn-glycero-3-phosphoethanolamine + CO2. It functions in the pathway phospholipid metabolism; phosphatidylethanolamine biosynthesis; phosphatidylethanolamine from CDP-diacylglycerol: step 2/2. Functionally, catalyzes the formation of phosphatidylethanolamine (PtdEtn) from phosphatidylserine (PtdSer). In Escherichia coli O127:H6 (strain E2348/69 / EPEC), this protein is Phosphatidylserine decarboxylase proenzyme.